Reading from the N-terminus, the 224-residue chain is UPF0441 protein PC1_0312 (224 aa).

The disordered stretch occupies residues 178–224; it reads PKTALAPKPATTSTITRGGFGETVAKQNSMQRSSASSSSSSSRSMGG. Residues 209-224 are compositionally biased toward low complexity; sequence RSSASSSSSSSRSMGG.

Belongs to the UPF0441 family.

This is UPF0441 protein PC1_0312 from Pectobacterium carotovorum subsp. carotovorum (strain PC1).